The primary structure comprises 88 residues: Small ribosomal subunit protein bS16 (88 aa).

Belongs to the bacterial ribosomal protein bS16 family.

In Halothermothrix orenii (strain H 168 / OCM 544 / DSM 9562), this protein is Small ribosomal subunit protein bS16.